The primary structure comprises 256 residues: Small ribosomal subunit protein eS1 (256 aa).

Residues 1-18 (MAVGKNKRLSKGKKGVKK) show a composition bias toward basic residues. The segment at 1–20 (MAVGKNKRLSKGKKGVKKRT) is disordered. A2 is modified (N-acetylalanine; partial).

This sequence belongs to the eukaryotic ribosomal protein eS1 family. In terms of assembly, component of the small ribosomal subunit. Mature ribosomes consist of a small (40S) and a large (60S) subunit. The 40S subunit contains about 33 different proteins and 1 molecule of RNA (18S). The 60S subunit contains about 49 different proteins and 3 molecules of RNA (25S, 5.8S and 5S).

The protein localises to the cytoplasm. The chain is Small ribosomal subunit protein eS1 (rps1) from Aspergillus clavatus (strain ATCC 1007 / CBS 513.65 / DSM 816 / NCTC 3887 / NRRL 1 / QM 1276 / 107).